The chain runs to 178 residues: MASSMISSPAVTTVNRAGAGTVAPFTGLKSMAGFPTRKTNNDIASIASNGGRVQCMQVWPTTGKKKFETLSYLPDLDDAQLAKEVEYLLRKGWIPCLEFELEHGFVYREHHRSPGYYDGRYWTMWKLPMFGCTDASQVLKELQEAKTAYPNAFIRIIGFDNVRQVQCISFIAYKPPSF.

The N-terminal 54 residues, 1 to 54, are a transit peptide targeting the chloroplast; it reads MASSMISSPAVTTVNRAGAGTVAPFTGLKSMAGFPTRKTNNDIASIASNGGRVQ.

This sequence belongs to the RuBisCO small chain family. As to quaternary structure, heterohexadecamer of 8 large and 8 small subunits.

The protein resides in the plastid. It is found in the chloroplast. Its function is as follows. RuBisCO catalyzes two reactions: the carboxylation of D-ribulose 1,5-bisphosphate, the primary event in carbon dioxide fixation, as well as the oxidative fragmentation of the pentose substrate. Both reactions occur simultaneously and in competition at the same active site. Although the small subunit is not catalytic it is essential for maximal activity. In Glycine tabacina, this protein is Ribulose bisphosphate carboxylase small subunit, chloroplastic.